Here is a 71-residue protein sequence, read N- to C-terminus: Protein CYSTEINE-RICH TRANSMEMBRANE MODULE 8 (71 aa).

The span at 1 to 22 (MNQSAQNYFSVQKPSETSSGPY) shows a compositional bias: polar residues. Residues 1-35 (MNQSAQNYFSVQKPSETSSGPYTSPPPIGYPTRDA) form a disordered region. The helical transmembrane segment at 48–64 (NSKGVNPEGCCAAICCC) threads the bilayer.

The protein belongs to the CYSTM1 family. In terms of tissue distribution, mostly expressed in stems, siliques, roots and flowers and, to a lower extent, in leaves.

The protein localises to the membrane. It is found in the nucleus. Its function is as follows. Involved in resistance to abiotic stress. This Arabidopsis thaliana (Mouse-ear cress) protein is Protein CYSTEINE-RICH TRANSMEMBRANE MODULE 8.